Consider the following 314-residue polypeptide: Methionyl-tRNA formyltransferase (314 aa).

112 to 115 (SLLP) lines the (6S)-5,6,7,8-tetrahydrofolate pocket.

The protein belongs to the Fmt family.

It catalyses the reaction L-methionyl-tRNA(fMet) + (6R)-10-formyltetrahydrofolate = N-formyl-L-methionyl-tRNA(fMet) + (6S)-5,6,7,8-tetrahydrofolate + H(+). In terms of biological role, attaches a formyl group to the free amino group of methionyl-tRNA(fMet). The formyl group appears to play a dual role in the initiator identity of N-formylmethionyl-tRNA by promoting its recognition by IF2 and preventing the misappropriation of this tRNA by the elongation apparatus. This chain is Methionyl-tRNA formyltransferase, found in Aeromonas salmonicida (strain A449).